We begin with the raw amino-acid sequence, 65 residues long: Large ribosomal subunit protein uL29 (65 aa).

This sequence belongs to the universal ribosomal protein uL29 family.

This Buchnera aphidicola subsp. Acyrthosiphon pisum (strain APS) (Acyrthosiphon pisum symbiotic bacterium) protein is Large ribosomal subunit protein uL29 (rpmC).